A 388-amino-acid chain; its full sequence is 2-methylene-furan-3-one reductase (388 aa).

The transit peptide at 1 to 60 (MEALLSSTTLQLKPLHPPSSFSSLHSPFSSISVLRVKGSKKAETFIQRSNFSTVLPLRVS) directs the protein to the chloroplast. NADP(+) contacts are provided by residues Lys-125, 240 to 241 (GV), 263 to 266 (STGK), Tyr-281, 330 to 332 (FVV), and 377 to 378 (RA). A substrate-binding site is contributed by Lys-125.

It belongs to the zinc-containing alcohol dehydrogenase family. Quinone oxidoreductase subfamily. As to quaternary structure, monomer.

It is found in the plastid. Its subcellular location is the chloroplast. The enzyme catalyses 4-hydroxy-2,5-dimethyl-furan-3(2H)-one + NADP(+) = 4-hydroxy-5-methyl-2-methylenefuran-3(2H)-one + NADPH + H(+). Its function is as follows. Enone oxidoreductase involved in the biosynthesis of 4-hydroxy-2,5-dimethyl-3(2H)-furanone (HDMF or furaneol). Can use both NADH and NADPH as the electron donor. The sequence is that of 2-methylene-furan-3-one reductase (EO) from Solanum lycopersicum (Tomato).